The sequence spans 95 residues: Aspartyl/glutamyl-tRNA(Asn/Gln) amidotransferase subunit C (95 aa).

It belongs to the GatC family. As to quaternary structure, heterotrimer of A, B and C subunits.

It carries out the reaction L-glutamyl-tRNA(Gln) + L-glutamine + ATP + H2O = L-glutaminyl-tRNA(Gln) + L-glutamate + ADP + phosphate + H(+). It catalyses the reaction L-aspartyl-tRNA(Asn) + L-glutamine + ATP + H2O = L-asparaginyl-tRNA(Asn) + L-glutamate + ADP + phosphate + 2 H(+). In terms of biological role, allows the formation of correctly charged Asn-tRNA(Asn) or Gln-tRNA(Gln) through the transamidation of misacylated Asp-tRNA(Asn) or Glu-tRNA(Gln) in organisms which lack either or both of asparaginyl-tRNA or glutaminyl-tRNA synthetases. The reaction takes place in the presence of glutamine and ATP through an activated phospho-Asp-tRNA(Asn) or phospho-Glu-tRNA(Gln). The protein is Aspartyl/glutamyl-tRNA(Asn/Gln) amidotransferase subunit C of Allorhizobium ampelinum (strain ATCC BAA-846 / DSM 112012 / S4) (Agrobacterium vitis (strain S4)).